The chain runs to 91 residues: Probable Fe(2+)-trafficking protein (91 aa).

Belongs to the Fe(2+)-trafficking protein family.

Could be a mediator in iron transactions between iron acquisition and iron-requiring processes, such as synthesis and/or repair of Fe-S clusters in biosynthetic enzymes. In Burkholderia thailandensis (strain ATCC 700388 / DSM 13276 / CCUG 48851 / CIP 106301 / E264), this protein is Probable Fe(2+)-trafficking protein.